We begin with the raw amino-acid sequence, 334 residues long: L-lactate dehydrogenase C chain (334 aa).

Residues 30-58, arginine 100, and asparagine 139 each bind NAD(+); that span reads GQVG…LEDK. 2 residues coordinate substrate: asparagine 139 and arginine 170. Histidine 194 acts as the Proton acceptor in catalysis. Threonine 249 contributes to the substrate binding site.

Belongs to the LDH/MDH superfamily. LDH family. As to quaternary structure, homotetramer.

It localises to the cytoplasm. The enzyme catalyses (S)-lactate + NAD(+) = pyruvate + NADH + H(+). The protein operates within fermentation; pyruvate fermentation to lactate; (S)-lactate from pyruvate: step 1/1. The polypeptide is L-lactate dehydrogenase C chain (ldhc) (Xenopus laevis (African clawed frog)).